Reading from the N-terminus, the 305-residue chain is MERSRVTREAPTGTRILLASLSAMVAESVTFPIDLTKTRMQLHGSGSASGAHRIGAFGVVSEIARKEGVIGLYKGLSPAIIRHLFYTPIRIIGYENLKGLIVRSETNNSESLPLATKALVGGFSGVIAQVVASPADLVKVRMQADGRLVSQGLKPRYSGPIEAFTKILQSEGVKGLWKGVLPNIQRAFLVNMGELACYDHAKHFVIDKKIAEDNIFAHTLASIMSGLASTSLSCPADVVKTRMMNQGENAVYRNSYDCLVKTVKFEGIRALWKGFFPTWARLGPWQFVFWVSYEKFRLLAGISSF.

3 Solcar repeats span residues 14–100 (TRIL…LKGL), 112–204 (LPLA…AKHF), and 213–299 (DNIF…FRLL). The next 6 membrane-spanning stretches (helical) occupy residues 16 to 36 (ILLA…IDLT), 69 to 89 (VIGL…YTPI), 118 to 138 (ALVG…ADLV), 178 to 198 (KGVL…LACY), 219 to 239 (TLAS…ADVV), and 272 to 292 (WKGF…FWVS).

This sequence belongs to the mitochondrial carrier (TC 2.A.29) family.

It localises to the mitochondrion inner membrane. Its function is as follows. PUMPS are mitochondrial transporter proteins that create proton leaks across the inner mitochondrial membrane, thus uncoupling oxidative phosphorylation. This leads to a decrease in the efficiency of oxidative phosphorylation and an increase in heat production. May be involved in protecting plant cells against oxidative stress damage. The polypeptide is Mitochondrial uncoupling protein 3 (PUMP3) (Arabidopsis thaliana (Mouse-ear cress)).